Consider the following 157-residue polypeptide: SsrA-binding protein (157 aa).

The protein belongs to the SmpB family.

It is found in the cytoplasm. Its function is as follows. Required for rescue of stalled ribosomes mediated by trans-translation. Binds to transfer-messenger RNA (tmRNA), required for stable association of tmRNA with ribosomes. tmRNA and SmpB together mimic tRNA shape, replacing the anticodon stem-loop with SmpB. tmRNA is encoded by the ssrA gene; the 2 termini fold to resemble tRNA(Ala) and it encodes a 'tag peptide', a short internal open reading frame. During trans-translation Ala-aminoacylated tmRNA acts like a tRNA, entering the A-site of stalled ribosomes, displacing the stalled mRNA. The ribosome then switches to translate the ORF on the tmRNA; the nascent peptide is terminated with the 'tag peptide' encoded by the tmRNA and targeted for degradation. The ribosome is freed to recommence translation, which seems to be the essential function of trans-translation. The chain is SsrA-binding protein from Levilactobacillus brevis (strain ATCC 367 / BCRC 12310 / CIP 105137 / JCM 1170 / LMG 11437 / NCIMB 947 / NCTC 947) (Lactobacillus brevis).